A 226-amino-acid polypeptide reads, in one-letter code: 2-C-methyl-D-erythritol 4-phosphate cytidylyltransferase (226 aa).

It belongs to the IspD/TarI cytidylyltransferase family. IspD subfamily.

The enzyme catalyses 2-C-methyl-D-erythritol 4-phosphate + CTP + H(+) = 4-CDP-2-C-methyl-D-erythritol + diphosphate. It functions in the pathway isoprenoid biosynthesis; isopentenyl diphosphate biosynthesis via DXP pathway; isopentenyl diphosphate from 1-deoxy-D-xylulose 5-phosphate: step 2/6. Its function is as follows. Catalyzes the formation of 4-diphosphocytidyl-2-C-methyl-D-erythritol from CTP and 2-C-methyl-D-erythritol 4-phosphate (MEP). This chain is 2-C-methyl-D-erythritol 4-phosphate cytidylyltransferase, found in Microcystis aeruginosa (strain NIES-843 / IAM M-2473).